The primary structure comprises 581 residues: Proline--tRNA ligase 1 (581 aa).

The protein belongs to the class-II aminoacyl-tRNA synthetase family. ProS type 1 subfamily. Homodimer.

It localises to the cytoplasm. The catalysed reaction is tRNA(Pro) + L-proline + ATP = L-prolyl-tRNA(Pro) + AMP + diphosphate. Its function is as follows. Catalyzes the attachment of proline to tRNA(Pro) in a two-step reaction: proline is first activated by ATP to form Pro-AMP and then transferred to the acceptor end of tRNA(Pro). As ProRS can inadvertently accommodate and process non-cognate amino acids such as alanine and cysteine, to avoid such errors it has two additional distinct editing activities against alanine. One activity is designated as 'pretransfer' editing and involves the tRNA(Pro)-independent hydrolysis of activated Ala-AMP. The other activity is designated 'posttransfer' editing and involves deacylation of mischarged Ala-tRNA(Pro). The misacylated Cys-tRNA(Pro) is not edited by ProRS. This is Proline--tRNA ligase 1 from Rhodococcus jostii (strain RHA1).